The following is a 68-amino-acid chain: Large ribosomal subunit protein uL29 (68 aa).

The protein belongs to the universal ribosomal protein uL29 family.

This chain is Large ribosomal subunit protein uL29, found in Chlorobaculum parvum (strain DSM 263 / NCIMB 8327) (Chlorobium vibrioforme subsp. thiosulfatophilum).